Consider the following 298-residue polypeptide: Sulfate adenylyltransferase subunit 2 (298 aa).

Composition is skewed to basic and acidic residues over residues 272–282 and 289–298; these read RTSERQGRLID and MEKKKQEGYF. The segment at 272 to 298 is disordered; the sequence is RTSERQGRLIDSDSAGSMEKKKQEGYF.

It belongs to the PAPS reductase family. CysD subfamily. In terms of assembly, heterodimer composed of CysD, the smaller subunit, and CysN.

The catalysed reaction is sulfate + ATP + H(+) = adenosine 5'-phosphosulfate + diphosphate. It functions in the pathway sulfur metabolism; hydrogen sulfide biosynthesis; sulfite from sulfate: step 1/3. In terms of biological role, with CysN forms the ATP sulfurylase (ATPS) that catalyzes the adenylation of sulfate producing adenosine 5'-phosphosulfate (APS) and diphosphate, the first enzymatic step in sulfur assimilation pathway. APS synthesis involves the formation of a high-energy phosphoric-sulfuric acid anhydride bond driven by GTP hydrolysis by CysN coupled to ATP hydrolysis by CysD. The chain is Sulfate adenylyltransferase subunit 2 from Burkholderia lata (strain ATCC 17760 / DSM 23089 / LMG 22485 / NCIMB 9086 / R18194 / 383).